We begin with the raw amino-acid sequence, 110 residues long: Light-harvesting complex-like protein OHP1, chloroplastic (110 aa).

Residues 1–41 (MSSSPLSSSLFHPLSTLSTHCHGRRQNLCFNRKQQPFVVRA) constitute a chloroplast transit peptide. The Stromal portion of the chain corresponds to 42-74 (AKLPEGVIVPKAQPKSQPAFLGFTQTAEIWNSR). The chain crosses the membrane as a helical span at residues 75-95 (ACMIGLIGTFIVELILNKGIL). Over 96 to 110 (ELIGVEIGKGLDLPL) the chain is Lumenal.

Belongs to the ELIP/psbS family. In terms of assembly, may bind chlorophyll and form dimers in the thylakoid membrane. Component of a high molecular weight complex containing OHP1, OHP2 and HCF244, and PSII core proteins D1/D2, HCF136 and HCF173. Interacts with HCF244. Forms a trimeric complex with OHP2 and HCF244 that mutually stabilizes each subunit. Mostly expressed in cotyledons and shoot apices.

It is found in the plastid. Its subcellular location is the chloroplast thylakoid membrane. May play a photoprotective role in the thylakoid membrane in response to light stress. Involved in photosystems I (PSI) and II (PSII) core proteins function. Forms a trimeric complex with OHP2 and HCF244 that is required to promote PSII core subunit assembly. The trimeric complex forms a transient PSII reaction center-like complex with PsbA, PsbD, PsbE, PsbF and PsbI subunits in thylakoids for early assembly of PSII as well as PSII repair. The trimeric complex is required for the recruitment of ribosomes to the psbA mRNA during PSII biogenesis and repair. Forms a heterodimer with OHP1 that binds chlorophylls and carotenoids, and that may function in the delivery of pigments to the PsbA subunit of PSII. The chain is Light-harvesting complex-like protein OHP1, chloroplastic from Arabidopsis thaliana (Mouse-ear cress).